The primary structure comprises 435 residues: Methylenetetrahydrofolate--tRNA-(uracil-5-)-methyltransferase TrmFO (435 aa).

7 to 12 (GAGLAG) serves as a coordination point for FAD.

It belongs to the MnmG family. TrmFO subfamily. The cofactor is FAD.

Its subcellular location is the cytoplasm. It catalyses the reaction uridine(54) in tRNA + (6R)-5,10-methylene-5,6,7,8-tetrahydrofolate + NADH + H(+) = 5-methyluridine(54) in tRNA + (6S)-5,6,7,8-tetrahydrofolate + NAD(+). The enzyme catalyses uridine(54) in tRNA + (6R)-5,10-methylene-5,6,7,8-tetrahydrofolate + NADPH + H(+) = 5-methyluridine(54) in tRNA + (6S)-5,6,7,8-tetrahydrofolate + NADP(+). Functionally, catalyzes the folate-dependent formation of 5-methyl-uridine at position 54 (M-5-U54) in all tRNAs. The polypeptide is Methylenetetrahydrofolate--tRNA-(uracil-5-)-methyltransferase TrmFO (Thermotoga petrophila (strain ATCC BAA-488 / DSM 13995 / JCM 10881 / RKU-1)).